A 104-amino-acid polypeptide reads, in one-letter code: Putative arsenate reductase (104 aa).

The active site involves C12.

Belongs to the ArsC family.

It catalyses the reaction [glutaredoxin]-dithiol + arsenate + glutathione + H(+) = glutathionyl-S-S-[glutaredoxin] + arsenite + H2O. Functionally, reduction of arsenate [As(V)] to arsenite [As(III)]. This protein expands the substrate specificity of ArsAB pump which can extrude arsenite and antimonite to allow for arsenate pumping and resistance. This chain is Putative arsenate reductase (yfjU), found in Escherichia coli (strain K12).